Consider the following 365-residue polypeptide: Alanine racemase (365 aa).

Lys-32 acts as the Proton acceptor; specific for D-alanine in catalysis. Position 32 is an N6-(pyridoxal phosphate)lysine (Lys-32). Arg-128 contacts substrate. Tyr-257 acts as the Proton acceptor; specific for L-alanine in catalysis. Substrate is bound at residue Met-305.

Belongs to the alanine racemase family. Pyridoxal 5'-phosphate is required as a cofactor.

It carries out the reaction L-alanine = D-alanine. It functions in the pathway amino-acid biosynthesis; D-alanine biosynthesis; D-alanine from L-alanine: step 1/1. Catalyzes the interconversion of L-alanine and D-alanine. May also act on other amino acids. The sequence is that of Alanine racemase (alr) from Francisella tularensis subsp. tularensis (strain SCHU S4 / Schu 4).